The sequence spans 443 residues: Cyclic GMP-AMP synthase (443 aa).

S61 is an ATP binding site. Residues D78 and D80 contribute to the active site. Residue D80 coordinates Mg(2+). N124 contributes to the ATP binding site. The active site involves D138. D138 serves as a coordination point for Mg(2+). L208 is an ATP binding site.

The protein belongs to the CD-NTase family. B06 subfamily. Requires Mg(2+) as cofactor.

The catalysed reaction is GTP + ATP = 3',3'-cGAMP + 2 diphosphate. The enzyme catalyses UTP + ATP = 3',3'-cUAMP + 2 diphosphate. It carries out the reaction 2 ATP = 3',3'-c-di-AMP + 2 diphosphate. It catalyses the reaction 2 GTP = 3',3'-c-di-GMP + 2 diphosphate. The catalysed reaction is UTP + GTP = 3',3'-cGMP-UMP + 2 diphosphate. Cyclic nucleotide synthase (second messenger synthase) of a CBASS antivirus system. CBASS (cyclic oligonucleotide-based antiphage signaling system) provides immunity against bacteriophages. The CD-NTase protein (CdnB, this protein) synthesizes cyclic nucleotides in response to infection; these serve as specific second messenger signals. The signals activate a diverse range of effectors, leading to bacterial cell death and thus abortive phage infection. The effector protein for this system is membrane protein Cap15. Its function is as follows. Catalyzes the synthesis of 3',3'-cyclic GMP-AMP (3'3'-cGAMP) from GTP and ATP, a second messenger in cell signal transduction. Also makes cyclic UMP-AMP, cyclic UMP-GMP, cyclic di-AMP and cyclic-di-GMP. In terms of biological role, protects E.coli against phage infection. When the CBASS operon (cdnB-cap15) is introduced in E.coli MG1655 there is about 100-fold protection against phage T2 and about 10-fold protection against phage T5 and T6. The polypeptide is Cyclic GMP-AMP synthase (Escherichia albertii).